The primary structure comprises 384 residues: MAAVWRWFVPERPSFYDRGLLALTFSLMGIGLMMVASASIKEGPGGDMFYFTKRHLIFLFVCLGIGVGTLYLPLERWREWSGRLLVGALGLLFAVLAVGRTVNGAKRWIGFGFFNIQPAELAKLALIVFIASYLVRRSDEVRGNIAGFVKPLAVVFLLAIMLLAQPDLGSVVVLFVCTFGLLFIGGAKLVQFIAIIVAGLSALAGLIIYEPYRLRRVTSFLDPWADPFGSGYQLTQSLMAFGRGGFFGQGLGNSVQKLSYLPEAHTDFVFAILGEELGYFGVLVVLFLQLLLAMKALQIGRTALLRSKFFEGYMACGIGIWFSFQTVVNVGAAAGMLPTKGLTLPLVSYGGSSLIAITMAVAILLRIDFERRLDTSHVIQREAA.

The Cytoplasmic segment spans residues 1–19; it reads MAAVWRWFVPERPSFYDRG. A helical transmembrane segment spans residues 20 to 40; that stretch reads LLALTFSLMGIGLMMVASASI. The Periplasmic segment spans residues 41–54; sequence KEGPGGDMFYFTKR. The helical transmembrane segment at 55–75 threads the bilayer; it reads HLIFLFVCLGIGVGTLYLPLE. The Cytoplasmic segment spans residues 76–83; that stretch reads RWREWSGR. A helical membrane pass occupies residues 84 to 104; that stretch reads LLVGALGLLFAVLAVGRTVNG. The Periplasmic portion of the chain corresponds to 105–110; sequence AKRWIG. A helical membrane pass occupies residues 111 to 131; the sequence is FGFFNIQPAELAKLALIVFIA. Residues 132 to 143 are Cytoplasmic-facing; the sequence is SYLVRRSDEVRG. The helical transmembrane segment at 144-164 threads the bilayer; that stretch reads NIAGFVKPLAVVFLLAIMLLA. The Periplasmic segment spans residues 165–166; it reads QP. The chain crosses the membrane as a helical span at residues 167–187; the sequence is DLGSVVVLFVCTFGLLFIGGA. Position 188 (K188) is a topological domain, cytoplasmic. The helical transmembrane segment at 189–209 threads the bilayer; the sequence is LVQFIAIIVAGLSALAGLIIY. Residues 210–267 are Periplasmic-facing; it reads EPYRLRRVTSFLDPWADPFGSGYQLTQSLMAFGRGGFFGQGLGNSVQKLSYLPEAHTD. A helical membrane pass occupies residues 268-288; the sequence is FVFAILGEELGYFGVLVVLFL. At 289 to 316 the chain is on the cytoplasmic side; it reads QLLLAMKALQIGRTALLRSKFFEGYMAC. Residues 317–337 form a helical membrane-spanning segment; sequence GIGIWFSFQTVVNVGAAAGML. Residues 338-343 lie on the Periplasmic side of the membrane; it reads PTKGLT. A helical membrane pass occupies residues 344-364; the sequence is LPLVSYGGSSLIAITMAVAIL. Residues 365–384 lie on the Cytoplasmic side of the membrane; the sequence is LRIDFERRLDTSHVIQREAA.

Belongs to the SEDS family. FtsW subfamily.

Its subcellular location is the cell inner membrane. The enzyme catalyses [GlcNAc-(1-&gt;4)-Mur2Ac(oyl-L-Ala-gamma-D-Glu-L-Lys-D-Ala-D-Ala)](n)-di-trans,octa-cis-undecaprenyl diphosphate + beta-D-GlcNAc-(1-&gt;4)-Mur2Ac(oyl-L-Ala-gamma-D-Glu-L-Lys-D-Ala-D-Ala)-di-trans,octa-cis-undecaprenyl diphosphate = [GlcNAc-(1-&gt;4)-Mur2Ac(oyl-L-Ala-gamma-D-Glu-L-Lys-D-Ala-D-Ala)](n+1)-di-trans,octa-cis-undecaprenyl diphosphate + di-trans,octa-cis-undecaprenyl diphosphate + H(+). The protein operates within cell wall biogenesis; peptidoglycan biosynthesis. Functionally, peptidoglycan polymerase that is essential for cell division. The chain is Probable peptidoglycan glycosyltransferase FtsW from Tolumonas auensis (strain DSM 9187 / NBRC 110442 / TA 4).